The following is a 524-amino-acid chain: Solute carrier family 35 member F5 (524 aa).

2 helical membrane passes run 69-89 (MALG…SSEL) and 101-121 (FFST…FIIW). Ser207 carries the post-translational modification Phosphoserine. A run of 8 helical transmembrane segments spans residues 244 to 264 (ISFF…EALS), 269 to 289 (AIVN…AAVF), 297 to 317 (FTLS…LVNL), 328 to 348 (TIGS…IVMI), 362 to 382 (MFFG…FFLL), 396 to 416 (VVLL…EFLW), 421 to 441 (FLTS…LSII), and 453 to 473 (WLFF…TLLC). Residues 253 to 317 (FLANLSYQEA…SIGGVVLVNL (65 aa)) form the EamA domain.

Belongs to the SLC35F solute transporter family.

Its subcellular location is the membrane. Its function is as follows. Putative solute transporter. The sequence is that of Solute carrier family 35 member F5 (Slc35f5) from Mus musculus (Mouse).